A 302-amino-acid chain; its full sequence is Gigasin-6 (302 aa).

The signal sequence occupies residues 1–22 (MSSRNLLYSSVVLFLVLFYCHG). Residues 75-95 (ITTDTLFGLGGISALFANILI) form a helical membrane-spanning segment.

As to expression, component of the organic matrix of calcified shell layers.

It localises to the membrane. The protein is Gigasin-6 of Magallana gigas (Pacific oyster).